The sequence spans 443 residues: Multidrug resistance protein MdtA (443 aa).

The signal sequence occupies residues 1–24 (MKAQSKRTSRLLILLGIAVAIIVA). Polar residues predominate over residues 36–46 (DGSTGAQQHAV). Disordered stretches follow at residues 36 to 57 (DGST…GGRR) and 398 to 443 (TPRS…AEKS). The segment covering 409-419 (AAEKPATAEKA) has biased composition (basic and acidic residues). Over residues 427–443 (SATGASAGSTTTAAEKS) the composition is skewed to low complexity.

The protein belongs to the membrane fusion protein (MFP) (TC 8.A.1) family. In terms of assembly, part of a tripartite efflux system composed of MdtA, MdtB and MdtC.

Its subcellular location is the cell inner membrane. The polypeptide is Multidrug resistance protein MdtA (Yersinia enterocolitica serotype O:8 / biotype 1B (strain NCTC 13174 / 8081)).